The primary structure comprises 167 residues: Stress-related protein (167 aa).

Belongs to the REF/SRPP family.

In terms of biological role, plays a role in plant defense. In Phaseolus vulgaris (Kidney bean), this protein is Stress-related protein (SRP).